Reading from the N-terminus, the 459-residue chain is Protein U54 (459 aa).

Positions 1–20 (MQPATLQWSSYVLQLRLTTA) are cleaved as a signal peptide. N-linked (GlcNAc...) asparagine; by host glycans are attached at residues asparagine 76, asparagine 100, asparagine 281, asparagine 321, and asparagine 452.

This sequence belongs to the herpesviridae UL82 family.

This Homo sapiens (Human) protein is Protein U54 (U54).